Reading from the N-terminus, the 476-residue chain is Zinc metalloproteinase/disintegrin (476 aa).

Positions 1 to 20 (MIQVLLVTICLAAFPYQGSS) are cleaved as a signal peptide. Residues 21–192 (IILESGNVND…ASQSNLTPEQ (172 aa)) constitute a propeptide that is removed on maturation. Glutamine 193 carries the post-translational modification Pyrrolidone carboxylic acid. The Peptidase M12B domain maps to 198-393 (RYIELAVVAD…HNPQCILNKP (196 aa)). Glutamate 201 and aspartate 285 together coordinate Ca(2+). Intrachain disulfides connect cysteine 309/cysteine 388, cysteine 348/cysteine 372, and cysteine 350/cysteine 355. Histidine 334 provides a ligand contact to Zn(2+). Glutamate 335 is a catalytic residue. 2 residues coordinate Zn(2+): histidine 338 and histidine 344. Positions 388 and 391 each coordinate Ca(2+). Residues 394-403 (LTTVSGNELL) constitute a propeptide that is removed on maturation. The Disintegrin domain occupies 395–476 (TTVSGNELLE…ADCPRNRFHA (82 aa)). 6 cysteine pairs are disulfide-bonded: cysteine 409–cysteine 424, cysteine 411–cysteine 419, cysteine 418–cysteine 441, cysteine 432–cysteine 438, cysteine 437–cysteine 462, and cysteine 450–cysteine 469. Residues 454–456 (RGD) carry the Cell attachment site motif.

The protein belongs to the venom metalloproteinase (M12B) family. P-II subfamily. P-IIa sub-subfamily. Monomer (metalloprotease). Requires Zn(2+) as cofactor. In terms of processing, the N-terminus is blocked. Post-translationally, not glycosylated. In terms of tissue distribution, expressed by the venom gland.

Its subcellular location is the secreted. Its activity is regulated as follows. Inhibited by EDTA, and 1,10-phenanthroline, but not by PMSF. Its function is as follows. Non-hemorrhagic proteinase that activates prothrombin (F2) calcium-independently. Activates factor X (F10) and hydrolyzes the Aalpha-chain and more slowly the Bbeta-chain of fibrin and fibrinogen without affecting the gamma chain. It induces neither detachment nor apoptosis of human endothelial cells and is also not able to trigger an endothelial pro-inflammatory cell response. Nitric oxide and prostacyclin levels released by endothelial cells are significantly increased after treatment with insularinase A. Inhibits ADP-induced platelet aggregation (IC(50)=0.8 uM for native protein). Interestingly, inhibits the adhesion of HUVECs to immobilized fibrinogen at very low concentrations (IC(50)=36 nM). The polypeptide is Zinc metalloproteinase/disintegrin (Bothrops insularis (Golden lancehead)).